A 398-amino-acid polypeptide reads, in one-letter code: MRASYLFTSESVSEGHPDKVCDRISDEIVDLFYREGPKAGIDPWQIRAACETLATTNKVVIAGETRGPKSVTNEQIEGVVRAAIKDIGYEQEGFHWKTCDIEILLHPQSADIAQGVDALQPGEVKEEGAGDQGIMFGYATNETPDLMPAPIFYAHKILRLISEARHSGREKVLGPDSKSQVTVQYENGKPVGVREIVVSHQHLVPDLTSSQVRDIVEPYVREALPKDWITPKTIWHINPTGKFYIGGPDGDAGLTGRKIIVDTYGGAAPHGGGAFSGKDPTKVDRSAAYAARYVAKNIVAAGLADRCTLQLAYAIGVARPLSIYIDTHGTGKVPEEQLEKAAAQAMDLTPRGIRSHLDLNRPIYARTSAYGHFGRTPDNEGGFSWEKTDLVEQLKRAL.

An ATP-binding site is contributed by His16. Residue Asp18 participates in Mg(2+) binding. Position 51 (Glu51) interacts with K(+). 2 residues coordinate L-methionine: Glu64 and Gln108. The flexible loop stretch occupies residues 108 to 118 (QSADIAQGVDA). Residues 176–178 (DSK), 242–243 (KF), Asp251, 257–258 (RK), Ala274, and Lys278 contribute to the ATP site. Asp251 provides a ligand contact to L-methionine. Residue Lys282 participates in L-methionine binding.

Belongs to the AdoMet synthase family. As to quaternary structure, homotetramer; dimer of dimers. Requires Mg(2+) as cofactor. K(+) serves as cofactor.

The protein localises to the cytoplasm. It catalyses the reaction L-methionine + ATP + H2O = S-adenosyl-L-methionine + phosphate + diphosphate. It participates in amino-acid biosynthesis; S-adenosyl-L-methionine biosynthesis; S-adenosyl-L-methionine from L-methionine: step 1/1. Catalyzes the formation of S-adenosylmethionine (AdoMet) from methionine and ATP. The overall synthetic reaction is composed of two sequential steps, AdoMet formation and the subsequent tripolyphosphate hydrolysis which occurs prior to release of AdoMet from the enzyme. This is S-adenosylmethionine synthase from Bradyrhizobium diazoefficiens (strain JCM 10833 / BCRC 13528 / IAM 13628 / NBRC 14792 / USDA 110).